Reading from the N-terminus, the 863-residue chain is uncharacterized protein (863 aa).

An N-terminal signal peptide occupies residues 1–29 (MHQSGSVSLCRSAISVLVATALYSPIALA). The 269-residue stretch at 595–863 (GVSYDTAMWS…NTQAGVVWTF (269 aa)) folds into the Autotransporter domain.

The protein resides in the cell outer membrane. This is an uncharacterized protein from Escherichia coli (strain K12).